The following is a 340-amino-acid chain: Beta-D-galactofuranosidase xynD (340 aa).

Residues 1–24 (MKHHNYYPSTCLSILPFLLPLTMS) form the signal peptide. The active-site Proton acceptor is the Asp51. Asn96 and Asn165 each carry an N-linked (GlcNAc...) asparagine glycan. Glu222 functions as the Proton donor in the catalytic mechanism. Asn302 and Asn328 each carry an N-linked (GlcNAc...) asparagine glycan.

Belongs to the glycosyl hydrolase 43 family.

It localises to the secreted. It functions in the pathway glycan degradation. Its function is as follows. Glycoside hydrolase family 43 beta-D-galactofuranosidase involved in the degradation of beta-galactofuranoside (Galf)-containing glycans such as galactomannan or O-glycans. Is not active on beta-1,5- or beta-1,6-linked beta-D-galactofuranose (Galf) residues. The protein is Beta-D-galactofuranosidase xynD of Aspergillus niger (strain ATCC MYA-4892 / CBS 513.88 / FGSC A1513).